The chain runs to 435 residues: MPAAQPSGFVATLLSSPQAGEEAWWQQVARLGTPLVEAQDSGRVRMTFLWRDPDGDERYSAIRRVYADINGVTDHHSTDPQSLERLPGTDVWHWSMAIEHDWRGSYSLIPIVAAQLPPVFSDDGQLRDEQQREWWCSLFPCAIADPLNRDQSWGEQLSAAHMPAAPSQQAWRAVDNGTALPPDAARLTVLDWKSEQLDNQRRIWLYTTGISDEPAQRPLCIVLDGQKWAEETPLFAALEAETAAGHLPPAVWLFIDAIDGETRCRELPCDAAFWLAVQDELLPQAARLAPFSDDPDRTVVSGQSYGGLAALYAGLHWPQRFGRVLTQSGSFWWPNLQFITDFDQRDTLEPGVLVTEVRQGGQTAWPLVIFQEAGRREADIAFVNQQMHEALVAAGHQVHQRVYAGGHDTLCWRGGLIDGFRWLLTGDDPQAASRD.

Belongs to the Fes family.

Its subcellular location is the cytoplasm. The enzyme catalyses Fe(III)-enterobactin + 3 H2O + H(+) = Fe(III)-[N-(2,3-dihydroxybenzoyl)-L-serine] + 2 N-(2,3-dihydroxybenzoyl)-L-serine. It catalyses the reaction Fe(III)-enterobactin + H2O = Fe(III)-[N-(2,3-dihydroxybenzoyl)-L-serine]3 + H(+). It carries out the reaction Fe(III)-[N-(2,3-dihydroxybenzoyl)-L-serine]3 + H2O + H(+) = Fe(III)-[N-(2,3-dihydroxybenzoyl)-L-serine]2 + N-(2,3-dihydroxybenzoyl)-L-serine. The catalysed reaction is Fe(III)-[N-(2,3-dihydroxybenzoyl)-L-serine]2 + H2O + H(+) = Fe(III)-[N-(2,3-dihydroxybenzoyl)-L-serine] + N-(2,3-dihydroxybenzoyl)-L-serine. Functionally, catalyzes the hydrolysis of ferric enterobactin (Fe-Ent). Is responsible for the release of iron from ferric enterobactin. This is Iron(III) enterobactin esterase (fes) from Dickeya dadantii (strain 3937) (Erwinia chrysanthemi (strain 3937)).